The following is a 346-amino-acid chain: Syntaxin UFE1 (346 aa).

At 1–324 (MMSDLTPIFR…RKAKRAAGRT (324 aa)) the chain is on the cytoplasmic side. The t-SNARE coiled-coil homology domain occupies 255–317 (LNQKNEQLKK…KKGNKELRKA (63 aa)). The chain crosses the membrane as a helical; Anchor for type IV membrane protein span at residues 325–342 (AKMTTYGAIIMGVFILFL). Over 343-346 (DYVG) the chain is Lumenal.

Belongs to the syntaxin family. As to quaternary structure, component of a SNARE complex consisting of UFE1, USE1, SEC20 and SEC22 or YKT6.

The protein resides in the endoplasmic reticulum membrane. Functionally, syntaxin required for targeting and fusion of Golgi-derived retrograde transport vesicles with the ER. The protein is Syntaxin UFE1 (UFE1) of Saccharomyces cerevisiae (strain ATCC 204508 / S288c) (Baker's yeast).